Here is a 259-residue protein sequence, read N- to C-terminus: Probable dihydroorotate dehydrogenase B (NAD(+)), electron transfer subunit (259 aa).

The FAD-binding FR-type domain maps to 1 to 89 (MLPLNATIVQ…RGPFGKGFSL (89 aa)). Positions 211, 216, 219, and 229 each coordinate [2Fe-2S] cluster.

The protein belongs to the PyrK family. As to quaternary structure, heterotetramer of 2 PyrK and 2 PyrD type B subunits. Requires [2Fe-2S] cluster as cofactor. It depends on FAD as a cofactor.

Its pathway is pyrimidine metabolism; UMP biosynthesis via de novo pathway; orotate from (S)-dihydroorotate (NAD(+) route): step 1/1. Its function is as follows. Responsible for channeling the electrons from the oxidation of dihydroorotate from the FMN redox center in the PyrD type B subunit to the ultimate electron acceptor NAD(+). This Methanosarcina barkeri (strain Fusaro / DSM 804) protein is Probable dihydroorotate dehydrogenase B (NAD(+)), electron transfer subunit.